Here is a 104-residue protein sequence, read N- to C-terminus: Endogenous retrovirus group K member 21 Rec protein (104 aa).

The disordered stretch occupies residues 1–48; the sequence is MHPSEMQRKAPPRRRRHRNRAPLTHKMNKMVTSEQMKLPSTKKAEPPT. Basic residues predominate over residues 10–20; the sequence is APPRRRRHRNR. The Nuclear localization signal motif lies at 13 to 20; sequence RRRRHRNR. A Nuclear export signal motif is present at residues 49 to 58; it reads WAQLKKLTQL.

In terms of assembly, forms homodimers, homotrimers, and homotetramers via a C-terminal domain. Associates with XPO1 and with ZNF145.

The protein localises to the cytoplasm. It is found in the nucleus. It localises to the nucleolus. Its function is as follows. Retroviral replication requires the nuclear export and translation of unspliced, singly-spliced and multiply-spliced derivatives of the initial genomic transcript. Rec interacts with a highly structured RNA element (RcRE) present in the viral 3'LTR and recruits the cellular nuclear export machinery. This permits export to the cytoplasm of unspliced genomic or incompletely spliced subgenomic viral transcripts. This is Endogenous retrovirus group K member 21 Rec protein (ERVK-21) from Homo sapiens (Human).